Reading from the N-terminus, the 181-residue chain is Bifunctional adenosylcobalamin biosynthesis protein CobU (181 aa).

Residues 7–14 (GGARSGKS) and 31–33 (ATS) contribute to the GTP site. Catalysis depends on His-47, which acts as the GMP-histidine intermediate. Residues 48–51 (RQGR), Glu-59, and Glu-81 each bind GTP.

Belongs to the CobU/CobP family. Homodimer.

It catalyses the reaction adenosylcob(III)inamide + GTP = adenosylcob(III)inamide phosphate + GDP + H(+). The enzyme catalyses adenosylcob(III)inamide + ATP = adenosylcob(III)inamide phosphate + ADP + H(+). The catalysed reaction is adenosylcob(III)inamide phosphate + GTP + H(+) = adenosylcob(III)inamide-GDP + diphosphate. Its pathway is cofactor biosynthesis; adenosylcobalamin biosynthesis; adenosylcobalamin from cob(II)yrinate a,c-diamide: step 5/7. The protein operates within cofactor biosynthesis; adenosylcobalamin biosynthesis; adenosylcobalamin from cob(II)yrinate a,c-diamide: step 6/7. Catalyzes ATP-dependent phosphorylation of adenosylcobinamide and addition of GMP to adenosylcobinamide phosphate. The chain is Bifunctional adenosylcobalamin biosynthesis protein CobU (cobU) from Escherichia coli (strain K12).